Reading from the N-terminus, the 728-residue chain is MVAIPRLARLSVPAWALSARGRFYATVSTPQTLVEKIVQKYAVGLSEGVKVRAGDYVMIKPEHVMTHDNTGPVISKFLSLSCSKLDNPRQPVFALDHDVQNQSETNQKKYKKIQAFAKEHGVDFYPAGRGIGHQIIVEEGYAWPGKMVVASDSHSNHYGGVGCLGTAIVRTDAAGIWATGKFWWQIPRIVSVSLDGRLSPGVTGKDVIVALAGLFNKDEVLNAAIEFTGSGVEHLSIDERLTIANMTTEWGAVAGVFPVDDKLKEWYQGILRKAELRKFISPTVPSTVGAKVHPRLNAARLDDAMTNRVVADPGAHYAARLSLDLSTLVPHVSGPNSVKVATALPKLLDPPIPINKAYLVSCTNSRASDIASAAQVLRGKKVAPGVEFYIAAASSRVQEDAEAAGDWQTLIDAGAKTLPAGCGPCIGLGVGLLEKGEVGISATNRNYKGRMGSPDAIAYLASPAVVAASAAKGVICGPESMDLSQLPQYEQPKFSIIKEGAAGEEKPVEVDEASLEPLLEGFPAYFEGPLLFAPQDNLTTDGMYPGKYTYQDDITPERQAEVVMENYDPTFAATARELRTALPTASSPSTLPGAILLSGYNFGTGSSREQAATAIKNAGIPLVICGSFGDIFKRNSINNGLILIESPSLIKDMTERFAKDGVRNKGGKDGKLTVVPEGWRIKVDSQRGLVTVNMGEEEEKTYPAAKVGRSVQELWVNGGLEGFIRASL.

The N-terminal 24 residues, 1 to 24 (MVAIPRLARLSVPAWALSARGRFY), are a transit peptide targeting the mitochondrion. 3 residues coordinate [4Fe-4S] cluster: cysteine 362, cysteine 422, and cysteine 425.

This sequence belongs to the aconitase/IPM isomerase family. [4Fe-4S] cluster is required as a cofactor.

Its subcellular location is the mitochondrion. The enzyme catalyses (2R,3S)-homoisocitrate = cis-homoaconitate + H2O. It participates in amino-acid biosynthesis; L-lysine biosynthesis via AAA pathway; L-alpha-aminoadipate from 2-oxoglutarate: step 3/5. Catalyzes the reversible hydration of cis-homoaconitate to (2R,3S)-homoisocitrate, a step in the alpha-aminoadipate pathway for lysine biosynthesis. In Cryptococcus neoformans var. neoformans serotype D (strain B-3501A) (Filobasidiella neoformans), this protein is Homoaconitase, mitochondrial (LYS4).